We begin with the raw amino-acid sequence, 236 residues long: Probable methylthioribulose-1-phosphate dehydratase (236 aa).

Residues 1 to 29 form a disordered region; the sequence is MQNVQQPKKRKLSDEIIAEDEDYQRDPEH. A substrate-binding site is contributed by Cys103. Residues His121, His123, and His201 each coordinate Zn(2+).

This sequence belongs to the aldolase class II family. MtnB subfamily. It depends on Zn(2+) as a cofactor.

The protein localises to the cytoplasm. The catalysed reaction is 5-(methylsulfanyl)-D-ribulose 1-phosphate = 5-methylsulfanyl-2,3-dioxopentyl phosphate + H2O. The protein operates within amino-acid biosynthesis; L-methionine biosynthesis via salvage pathway; L-methionine from S-methyl-5-thio-alpha-D-ribose 1-phosphate: step 2/6. In terms of biological role, catalyzes the dehydration of methylthioribulose-1-phosphate (MTRu-1-P) into 2,3-diketo-5-methylthiopentyl-1-phosphate (DK-MTP-1-P). The chain is Probable methylthioribulose-1-phosphate dehydratase from Trichoplax adhaerens (Trichoplax reptans).